The sequence spans 151 residues: Large ribosomal subunit protein uL13 (151 aa).

The tract at residues 129–151 (SNHPHQAQKPETLTINTIPGGNN) is disordered.

It belongs to the universal ribosomal protein uL13 family. Part of the 50S ribosomal subunit.

Its function is as follows. This protein is one of the early assembly proteins of the 50S ribosomal subunit, although it is not seen to bind rRNA by itself. It is important during the early stages of 50S assembly. The sequence is that of Large ribosomal subunit protein uL13 from Gloeothece citriformis (strain PCC 7424) (Cyanothece sp. (strain PCC 7424)).